The chain runs to 648 residues: DNA ligase (648 aa).

NAD(+) is bound by residues 30-34 (DEEYD), 79-80 (SM), and glutamate 108. The N6-AMP-lysine intermediate role is filled by lysine 110. Residues arginine 131, glutamate 165, lysine 280, and lysine 304 each contribute to the NAD(+) site. Residues cysteine 398, cysteine 401, cysteine 414, and cysteine 419 each coordinate Zn(2+). The BRCT domain maps to 573–648 (AKENPFKGKI…LTEDEMRAML (76 aa)).

This sequence belongs to the NAD-dependent DNA ligase family. LigA subfamily. Requires Mg(2+) as cofactor. Mn(2+) is required as a cofactor.

It carries out the reaction NAD(+) + (deoxyribonucleotide)n-3'-hydroxyl + 5'-phospho-(deoxyribonucleotide)m = (deoxyribonucleotide)n+m + AMP + beta-nicotinamide D-nucleotide.. In terms of biological role, DNA ligase that catalyzes the formation of phosphodiester linkages between 5'-phosphoryl and 3'-hydroxyl groups in double-stranded DNA using NAD as a coenzyme and as the energy source for the reaction. It is essential for DNA replication and repair of damaged DNA. The sequence is that of DNA ligase from Sulfurovum sp. (strain NBC37-1).